Reading from the N-terminus, the 216-residue chain is Holliday junction branch migration complex subunit RuvA (216 aa).

The interval 1–64 is domain I; sequence MISFIKGVLI…EDAQQLYGFK (64 aa). The domain II stretch occupies residues 65–143; sequence SKVDKKVFQE…KMANEIYAQT (79 aa). A flexible linker region spans residues 144–163; sequence SGTTTTSQDSQAQQAPTSVV. The domain III stretch occupies residues 164 to 216; that stretch reads LANSIFNESVDALLALGYKQKDAEKMARSAMGDATTAAEVIRKALQGSIKSKR.

It belongs to the RuvA family. In terms of assembly, homotetramer. Forms an RuvA(8)-RuvB(12)-Holliday junction (HJ) complex. HJ DNA is sandwiched between 2 RuvA tetramers; dsDNA enters through RuvA and exits via RuvB. An RuvB hexamer assembles on each DNA strand where it exits the tetramer. Each RuvB hexamer is contacted by two RuvA subunits (via domain III) on 2 adjacent RuvB subunits; this complex drives branch migration. In the full resolvosome a probable DNA-RuvA(4)-RuvB(12)-RuvC(2) complex forms which resolves the HJ.

The protein resides in the cytoplasm. In terms of biological role, the RuvA-RuvB-RuvC complex processes Holliday junction (HJ) DNA during genetic recombination and DNA repair, while the RuvA-RuvB complex plays an important role in the rescue of blocked DNA replication forks via replication fork reversal (RFR). RuvA specifically binds to HJ cruciform DNA, conferring on it an open structure. The RuvB hexamer acts as an ATP-dependent pump, pulling dsDNA into and through the RuvAB complex. HJ branch migration allows RuvC to scan DNA until it finds its consensus sequence, where it cleaves and resolves the cruciform DNA. The polypeptide is Holliday junction branch migration complex subunit RuvA (Francisella tularensis subsp. mediasiatica (strain FSC147)).